An 850-amino-acid chain; its full sequence is DNA mismatch repair protein MutS (850 aa).

Position 608–615 (608–615) interacts with ATP; it reads GPNMGGKS.

Belongs to the DNA mismatch repair MutS family.

In terms of biological role, this protein is involved in the repair of mismatches in DNA. It is possible that it carries out the mismatch recognition step. This protein has a weak ATPase activity. The chain is DNA mismatch repair protein MutS from Thiobacillus denitrificans (strain ATCC 25259 / T1).